Reading from the N-terminus, the 505-residue chain is Monocarboxylate transporter 10 (505 aa).

Over residues 1–14 (MTEPEPTLEQEPTP) the composition is skewed to acidic residues. The interval 1-64 (MTEPEPTLEQ…EQKSPEEFEP (64 aa)) is disordered. Over 1–66 (MTEPEPTLEQ…KSPEEFEPPE (66 aa)) the chain is Cytoplasmic. The segment covering 15 to 31 (EPEPTQEPTPEPTPEPE) has biased composition (pro residues). The segment covering 32–41 (PTQEPESEPE) has biased composition (acidic residues). The chain crosses the membrane as a helical span at residues 67 to 87 (GGWGWVVMLASMWCNGSVFGI). The Extracellular portion of the chain corresponds to 88-114 (QNAFGIMFVYLLNEFGSEHDADLRFKT). The chain crosses the membrane as a helical span at residues 115–135 (AWVGSLSMGMIFFCSPIVSVF). Over 136–142 (TDLLGCR) the chain is Cytoplasmic. Residues 143–163 (ITAVGGAAVGCVGLLASSFVT) traverse the membrane as a helical segment. Residues 164-171 (SLGPMYFT) lie on the Extracellular side of the membrane. A helical transmembrane segment spans residues 172-192 (YGIVFACGCSFAYQPSLVILG). Residues 193-204 (HYFKRRLGLVNG) lie on the Cytoplasmic side of the membrane. A helical membrane pass occupies residues 205 to 225 (IVTAGSSVFTITLPYMLSGLL). Residues 226–235 (KSVGLYHTLR) lie on the Extracellular side of the membrane. A helical transmembrane segment spans residues 236-256 (VLAIFMFILMLAGLTYKPLLP). At 257 to 286 (KPVSSSKPGSRCPPLSRIFNVNIWKSLGYR) the chain is on the cytoplasmic side. Residues 287–307 (IWAFGIPAALYGYFVPYVHLM) form a helical membrane-spanning segment. Topologically, residues 308–321 (THVEERFGPEANKE) are extracellular. Residues 322 to 342 (VLLACIGITSGVGRLIFGRVA) traverse the membrane as a helical segment. Asp-343 is a topological domain (cytoplasmic). Residues 344-364 (YVPGVNKVFLQVSSFMVIGVM) traverse the membrane as a helical segment. The Extracellular segment spans residues 365–377 (SMMIPLCHVFGGL). A helical transmembrane segment spans residues 378 to 400 (IAVCLLMGLFDGCFICIMAPIAF). Topologically, residues 401–411 (ELVGSQNVSQA) are cytoplasmic. The helical transmembrane segment at 412–432 (IGFLLGMMSIPMTVGPPIAGF) threads the bilayer. At 433-443 (LRDRLGSYDVA) the chain is on the extracellular side. Residues 444–464 (FYLAGIPPLIGGAVLCAIPWV) traverse the membrane as a helical segment. At 465–505 (EARRKRREAANTAENTEKMLESRSPPLEDTVCRTEEPESVI) the chain is on the cytoplasmic side. The tract at residues 474-505 (ANTAENTEKMLESRSPPLEDTVCRTEEPESVI) is disordered. Positions 494–505 (TVCRTEEPESVI) are enriched in basic and acidic residues.

The protein belongs to the major facilitator superfamily. Monocarboxylate porter (TC 2.A.1.13) family.

Its subcellular location is the cell membrane. It is found in the basolateral cell membrane. The catalysed reaction is L-tryptophan(in) = L-tryptophan(out). The enzyme catalyses L-tyrosine(in) = L-tyrosine(out). It catalyses the reaction L-phenylalanine(in) = L-phenylalanine(out). It carries out the reaction 3,3',5-triiodo-L-thyronine(out) = 3,3',5-triiodo-L-thyronine(in). The catalysed reaction is L-thyroxine(out) = L-thyroxine(in). Functionally, sodium- and proton-independent thyroid hormones and aromatic acids transporter. Mediates both uptake and efflux of 3,5,3'-triiodothyronine (T3) and 3,5,3',5'-tetraiodothyronine (T4) with high affinity, suggesting a role in the homeostasis of thyroid hormone levels. Responsible for low affinity bidirectional transport of the aromatic amino acids, such as phenylalanine, tyrosine, tryptophan and L-3,4-dihydroxyphenylalanine (L-dopa). Plays an important role in homeostasis of aromatic amino acids. The protein is Monocarboxylate transporter 10 (slc16a10) of Danio rerio (Zebrafish).